A 303-amino-acid polypeptide reads, in one-letter code: Acetaldehyde dehydrogenase 1 (303 aa).

Cysteine 130 acts as the Acyl-thioester intermediate in catalysis. NAD(+)-binding positions include 161–169 (SVGPGTRKN) and asparagine 272.

It belongs to the acetaldehyde dehydrogenase family.

The enzyme catalyses acetaldehyde + NAD(+) + CoA = acetyl-CoA + NADH + H(+). The chain is Acetaldehyde dehydrogenase 1 from Cupriavidus metallidurans (strain ATCC 43123 / DSM 2839 / NBRC 102507 / CH34) (Ralstonia metallidurans).